The sequence spans 244 residues: Tyrosine recombinase XerD-like (244 aa).

The Core-binding (CB) domain occupies 1–73 (MRDRISAFLE…ACNQFLYFLY (73 aa)). The 155-residue stretch at 90–244 (AEKKTEKPEI…KTVLTLEKYR (155 aa)) folds into the Tyr recombinase domain. Residues Lys150 and Arg211 contribute to the active site. Tyr243 acts as the O-(3'-phospho-DNA)-tyrosine intermediate in catalysis.

This sequence belongs to the 'phage' integrase family. XerD-like subfamily.

It localises to the cytoplasm. Its function is as follows. Putative tyrosine recombinase. Not involved in the cutting and rejoining of the recombining DNA molecules on dif(SL) site. This chain is Tyrosine recombinase XerD-like, found in Streptococcus pneumoniae (strain CGSP14).